The chain runs to 101 residues: Small ribosomal subunit protein uS14 (101 aa).

It belongs to the universal ribosomal protein uS14 family. As to quaternary structure, part of the 30S ribosomal subunit. Contacts proteins S3 and S10.

Binds 16S rRNA, required for the assembly of 30S particles and may also be responsible for determining the conformation of the 16S rRNA at the A site. The protein is Small ribosomal subunit protein uS14 of Arthrobacter sp. (strain FB24).